Reading from the N-terminus, the 251-residue chain is Urease accessory protein UreF (251 aa).

A disordered region spans residues 1 to 20 (MAPAPDPAPAGSAAPDPASA). Positions 9–20 (PAGSAAPDPASA) are enriched in low complexity.

The protein belongs to the UreF family. In terms of assembly, ureD, UreF and UreG form a complex that acts as a GTP-hydrolysis-dependent molecular chaperone, activating the urease apoprotein by helping to assemble the nickel containing metallocenter of UreC. The UreE protein probably delivers the nickel.

Its subcellular location is the cytoplasm. Functionally, required for maturation of urease via the functional incorporation of the urease nickel metallocenter. The protein is Urease accessory protein UreF of Paracidovorax citrulli (strain AAC00-1) (Acidovorax citrulli).